The primary structure comprises 95 residues: Co-chaperonin GroES (95 aa).

It belongs to the GroES chaperonin family. Heptamer of 7 subunits arranged in a ring. Interacts with the chaperonin GroEL.

The protein localises to the cytoplasm. Together with the chaperonin GroEL, plays an essential role in assisting protein folding. The GroEL-GroES system forms a nano-cage that allows encapsulation of the non-native substrate proteins and provides a physical environment optimized to promote and accelerate protein folding. GroES binds to the apical surface of the GroEL ring, thereby capping the opening of the GroEL channel. The polypeptide is Co-chaperonin GroES (Bordetella bronchiseptica (strain ATCC BAA-588 / NCTC 13252 / RB50) (Alcaligenes bronchisepticus)).